Reading from the N-terminus, the 306-residue chain is Acyl transferase (306 aa).

Catalysis depends on charge relay system residues Ser-117, Asp-214, and His-244.

The protein belongs to the LuxD family.

It participates in lipid metabolism; fatty acid reduction for biolumincescence. In terms of biological role, acyl transferase is part of the fatty acid reductase system required for aldehyde biosynthesis; it produces fatty acids for the luminescent reaction. This Photobacterium phosphoreum protein is Acyl transferase.